A 570-amino-acid polypeptide reads, in one-letter code: Enhancer of polycomb-like protein 1 (570 aa).

The segment at 541–570 (ALNNLNSGQTSGQTMGSNPGPGAIAPTPET) is disordered. The span at 543–557 (NNLNSGQTSGQTMGS) shows a compositional bias: polar residues.

This sequence belongs to the enhancer of polycomb family. As to quaternary structure, component of the NuA4 histone acetyltransferase complex.

The protein resides in the nucleus. Its function is as follows. Component of the NuA4 histone acetyltransferase complex which is involved in transcriptional activation of selected genes principally by acetylation of nucleosomal histone H4 and H2A. The NuA4 complex is also involved in DNA repair. Involved in gene silencing by neighboring heterochromatin, blockage of the silencing spreading along the chromosome, and required for cell cycle progression through G2/M. This chain is Enhancer of polycomb-like protein 1 (epl1), found in Emericella nidulans (strain FGSC A4 / ATCC 38163 / CBS 112.46 / NRRL 194 / M139) (Aspergillus nidulans).